The sequence spans 226 residues: Reticulon-like protein B16 (226 aa).

One can recognise a Reticulon domain in the interval 41-224 (AADLLLWRRR…RLSWSLSKDK (184 aa)). Transmembrane regions (helical) follow at residues 54 to 74 (LGVI…GLPF), 75 to 95 (LSVS…HARV), and 149 to 169 (VVIC…CTLL).

It is found in the endoplasmic reticulum membrane. This is Reticulon-like protein B16 (RTNLB16) from Arabidopsis thaliana (Mouse-ear cress).